A 240-amino-acid chain; its full sequence is Transmembrane emp24 domain-containing protein 6 (240 aa).

A signal peptide spans M1–S21. Residues Q22–Y200 lie on the Lumenal side of the membrane. Residues T53–V138 form the GOLD domain. N107 and N156 each carry an N-linked (GlcNAc...) asparagine glycan. The helical transmembrane segment at V201–L223 threads the bilayer. Residues K224–C240 lie on the Cytoplasmic side of the membrane.

Belongs to the EMP24/GP25L family.

The protein localises to the endoplasmic reticulum membrane. This chain is Transmembrane emp24 domain-containing protein 6 (TMED6), found in Bos taurus (Bovine).